The primary structure comprises 216 residues: Phosphatidylserine decarboxylase proenzyme (216 aa).

Serine 182 functions as the Schiff-base intermediate with substrate; via pyruvic acid in the catalytic mechanism. Serine 182 is subject to Pyruvic acid (Ser); by autocatalysis.

Belongs to the phosphatidylserine decarboxylase family. PSD-A subfamily. Heterodimer of a large membrane-associated beta subunit and a small pyruvoyl-containing alpha subunit. Pyruvate serves as cofactor. Post-translationally, is synthesized initially as an inactive proenzyme. Formation of the active enzyme involves a self-maturation process in which the active site pyruvoyl group is generated from an internal serine residue via an autocatalytic post-translational modification. Two non-identical subunits are generated from the proenzyme in this reaction, and the pyruvate is formed at the N-terminus of the alpha chain, which is derived from the carboxyl end of the proenzyme. The post-translation cleavage follows an unusual pathway, termed non-hydrolytic serinolysis, in which the side chain hydroxyl group of the serine supplies its oxygen atom to form the C-terminus of the beta chain, while the remainder of the serine residue undergoes an oxidative deamination to produce ammonia and the pyruvoyl prosthetic group on the alpha chain.

The protein resides in the cell membrane. The enzyme catalyses a 1,2-diacyl-sn-glycero-3-phospho-L-serine + H(+) = a 1,2-diacyl-sn-glycero-3-phosphoethanolamine + CO2. It participates in phospholipid metabolism; phosphatidylethanolamine biosynthesis; phosphatidylethanolamine from CDP-diacylglycerol: step 2/2. Catalyzes the formation of phosphatidylethanolamine (PtdEtn) from phosphatidylserine (PtdSer). This chain is Phosphatidylserine decarboxylase proenzyme, found in Burkholderia mallei (strain NCTC 10247).